Consider the following 263-residue polypeptide: Palmitoyltransferase ZDHHC21 (263 aa).

Topologically, residues 1 to 4 (MKMR) are cytoplasmic. A helical transmembrane segment spans residues 5–25 (LHFVVDPMGWFCMSMVFFVWI). Over 26 to 44 (YNSFLIPKLVLLPHYAEGH) the chain is Extracellular. Residues 45–65 (ITAEPVICYYLASLLCFSALF) traverse the membrane as a helical segment. The Cytoplasmic segment spans residues 66–131 (RASTTDPGKL…WINNCVGEDN (66 aa)). Residues 90–140 (ELCNKCNMMRPKRSHHCSRCGHCVRRMDHHCPWINNCVGEDNHWLFLQLCF) form the DHHC domain. C120 serves as the catalytic S-palmitoyl cysteine intermediate. A helical transmembrane segment spans residues 132–152 (HWLFLQLCFYTQVLSFYTLVL). Residues 153 to 181 (DFCQYYYFLPLSSVDQADFAVHHELALLR) are Extracellular-facing. A helical membrane pass occupies residues 182-202 (VSCFMGLIMFGGISSLFYTQV). Residues 203–263 (KGILTDTTTI…KLNLTIRSHV (61 aa)) are Cytoplasmic-facing.

This sequence belongs to the DHHC palmitoyltransferase family.

The protein resides in the golgi apparatus membrane. Its subcellular location is the golgi apparatus. It localises to the cis-Golgi network membrane. The protein localises to the cell membrane. The catalysed reaction is L-cysteinyl-[protein] + hexadecanoyl-CoA = S-hexadecanoyl-L-cysteinyl-[protein] + CoA. Palmitoyltransferase that catalyzes the addition of palmitate onto various protein substrates. In Danio rerio (Zebrafish), this protein is Palmitoyltransferase ZDHHC21.